The sequence spans 1587 residues: Autophagy-related protein 2 (1587 aa).

Positions 128–160 are disordered; the sequence is NEISGSGSDSPRIPDDYTNPSSAGGNPTTNTYD. The segment covering 145 to 159 has biased composition (polar residues); that stretch reads TNPSSAGGNPTTNTY.

Belongs to the ATG2 family.

It is found in the preautophagosomal structure membrane. It localises to the endoplasmic reticulum membrane. The catalysed reaction is a 1,2-diacyl-sn-glycero-3-phosphocholine(in) = a 1,2-diacyl-sn-glycero-3-phosphocholine(out). It carries out the reaction a 1,2-diacyl-sn-glycero-3-phospho-L-serine(in) = a 1,2-diacyl-sn-glycero-3-phospho-L-serine(out). The enzyme catalyses a 1,2-diacyl-sn-glycero-3-phosphoethanolamine(in) = a 1,2-diacyl-sn-glycero-3-phosphoethanolamine(out). Lipid transfer protein required for autophagosome completion and peroxisome degradation. Tethers the edge of the isolation membrane (IM) to the endoplasmic reticulum (ER) and mediates direct lipid transfer from ER to IM for IM expansion. ATG2 binds to the ER exit site (ERES), which is the membrane source for autophagosome formation, using basic residues in its N-terminal region (NR) and to the expanding edge of the IM through its C-terminal region. The latter binding is assisted by an ATG18-PtdIns3P interaction. ATG2 then extracts phospholipids from the membrane source using its NR and transfers them to ATG9 to the IM through its predicted beta-sheet-rich structure for membrane expansion. The protein is Autophagy-related protein 2 (ATG2) of Candida glabrata (strain ATCC 2001 / BCRC 20586 / JCM 3761 / NBRC 0622 / NRRL Y-65 / CBS 138) (Yeast).